A 378-amino-acid chain; its full sequence is Signal peptide peptidase (378 aa).

Positions 1–27 (MDSAVSDPHNGSAEAGTPANGTTRPPS) are disordered. Topologically, residues 1 to 31 (MDSAVSDPHNGSAEAGTPANGTTRPPSTPEG) are lumenal. N-linked (GlcNAc...) asparagine glycosylation is found at Asn10 and Asn20. A helical transmembrane segment spans residues 32-52 (IALAYGSLLLMALLPIFFGAL). The Cytoplasmic segment spans residues 53–77 (RSVRCARGKSSSDMPETITSRDAAR). The helical transmembrane segment at 78–98 (FPIIASCTLLGLYLFFKIFSQ) threads the bilayer. Topologically, residues 99–100 (EY) are lumenal. Residues 101–121 (INLLLSMYFFVLGILALSHTI) form a helical membrane-spanning segment. Residues 122–157 (SPFMNKFFPANFPNRQYQLLFTQGSGENKEEIINYE) are Cytoplasmic-facing. A helical transmembrane segment spans residues 158-178 (FDTKDLVCLGLSSVVGVWYLL). At 179–181 (RKH) the chain is on the lumenal side. Residues 182–202 (WIANNLFGLAFSLNGVELLHL) traverse the membrane as a helical segment. Over 203-209 (NNVSTGC) the chain is Cytoplasmic. A helical transmembrane segment spans residues 210–230 (ILLGGLFIYDIFWVFGTNVMV). The active site involves Asp219. Residues 231-256 (TVAKSFEAPIKLVFPQDLLEKGLEAD) are Lumenal-facing. A helical transmembrane segment spans residues 257-277 (NFAMLGLGDIVIPGIFIALLL). The active site involves Asp265. At 278–290 (RFDISLKKNTHTY) the chain is on the cytoplasmic side. The chain crosses the membrane as a helical span at residues 291–311 (FYTSFAAYIFGLGLTIFIMHI). Residues 312–314 (FKH) lie on the Lumenal side of the membrane. Residues 315–335 (AQPALLYLVPACIGFPVLVAL) form a helical membrane-spanning segment. The PAL signature appears at 317-319 (PAL). The Cytoplasmic portion of the chain corresponds to 336–378 (AKGEVAEMFSYEESNPKDPAAETESKEESTEASASKRLEKKEK). The disordered stretch occupies residues 346-378 (YEESNPKDPAAETESKEESTEASASKRLEKKEK). Residues 349–378 (SNPKDPAAETESKEESTEASASKRLEKKEK) show a composition bias toward basic and acidic residues. A Phosphoserine modification is found at Ser368.

This sequence belongs to the peptidase A22B family. Monomer. Homodimer. Interacts with RNF139. Interacts with DERL1 and XBP1 isoform 1. In terms of tissue distribution, widely expressed with highest levels in liver and kidney. In the brain, expressed predominantly in hippocampus, amygdala, piriform cortex, choroid plexus and arcuate nucleus of the hypothalamic area. Isoform 1 is more strongly expressed than isoform 4 in most tissues except brain and skeletal muscle where isoform 4 is the dominant isoform and in testis where isoform 1 and isoform 4 are expressed at similar levels. In the brain, isoform 4 is not detected in the choroid plexus.

It is found in the endoplasmic reticulum membrane. Its subcellular location is the membrane. The protein resides in the cell membrane. Functionally, catalyzes intramembrane proteolysis of signal peptides that have been removed from precursors of secretory and membrane proteins, resulting in the release of the fragment from the ER membrane into the cytoplasm. Required to generate lymphocyte cell surface (HLA-E) epitopes derived from MHC class I signal peptides. Involved in the intramembrane cleavage of the integral membrane protein PSEN1. Cleaves the integral membrane protein XBP1 isoform 1 in a DERL1/RNF139-dependent manner. May play a role in graft rejection. The protein is Signal peptide peptidase of Mus musculus (Mouse).